We begin with the raw amino-acid sequence, 132 residues long: Small ribosomal subunit protein uS8 (132 aa).

Belongs to the universal ribosomal protein uS8 family. As to quaternary structure, part of the 30S ribosomal subunit. Contacts proteins S5 and S12.

Its function is as follows. One of the primary rRNA binding proteins, it binds directly to 16S rRNA central domain where it helps coordinate assembly of the platform of the 30S subunit. This chain is Small ribosomal subunit protein uS8, found in Streptococcus pyogenes serotype M1.